A 216-amino-acid chain; its full sequence is Uracil phosphoribosyltransferase (216 aa).

Residues arginine 30, arginine 39, 73 to 76, and lysine 75 each bind GTP; that span reads ASKI. Arginine 83 is a binding site for 5-phospho-alpha-D-ribose 1-diphosphate. Position 100 (lysine 100) interacts with GTP. Arginine 108 is a binding site for 5-phospho-alpha-D-ribose 1-diphosphate. Arginine 129 serves as a coordination point for GTP. Residues aspartate 135 and 135–143 contribute to the 5-phospho-alpha-D-ribose 1-diphosphate site; that span reads DPMLATGGT. Residue tyrosine 199 participates in D-ribose 5-phosphate binding. Uracil-binding positions include isoleucine 200 and 205–207; that span reads GDF. Aspartate 206 provides a ligand contact to 5-phospho-alpha-D-ribose 1-diphosphate.

Belongs to the UPRTase family. Mg(2+) is required as a cofactor.

It carries out the reaction UMP + diphosphate = 5-phospho-alpha-D-ribose 1-diphosphate + uracil. Its pathway is pyrimidine metabolism; UMP biosynthesis via salvage pathway; UMP from uracil: step 1/1. Allosterically activated by GTP. Functionally, catalyzes the conversion of uracil and 5-phospho-alpha-D-ribose 1-diphosphate (PRPP) to UMP and diphosphate. This chain is Uracil phosphoribosyltransferase (uprt), found in Dictyostelium discoideum (Social amoeba).